The sequence spans 91 residues: Probable Fe(2+)-trafficking protein (91 aa).

Belongs to the Fe(2+)-trafficking protein family.

Its function is as follows. Could be a mediator in iron transactions between iron acquisition and iron-requiring processes, such as synthesis and/or repair of Fe-S clusters in biosynthetic enzymes. This is Probable Fe(2+)-trafficking protein from Acidobacterium capsulatum (strain ATCC 51196 / DSM 11244 / BCRC 80197 / JCM 7670 / NBRC 15755 / NCIMB 13165 / 161).